The following is a 3014-amino-acid chain: MAPPPPPVLPVLLLLAAAAALPAMGLRAAAWEPRVPGGTRAFALRPGCTYAVGAACTPRAPRELLDVGRDGRLAGRRRVSGAGRPLPLQVRLVARSAPTALSRRLRARTHLPGCGARARLCGTGARLCGALCFPVPGGCAAAQHSALAAPTTLPACRCPPRPRPRCPGRPICLPPGGSVRLRLLCALRRAAGAVRVGLALEAATAGTPSASPSPSPPLPPNLPEARAGPARRARRGTSGRGSLKFPMPNYQVALFENEPAGTLILQLHAHYTIEGEEERVSYYMEGLFDERSRGYFRIDSATGAVSTDSVLDRETKETHVLRVKAVDYSTPPRSATTYITVLVKDTNDHSPVFEQSEYRERVRENLEVGYEVLTIRASDRDSPINANLRYRVLGGAWDVFQLNESSGVVSTRAVLDREEAAEYQLLVEANDQGRNPGPLSATATVYIEVEDENDNYPQFSEQNYVVQVPEDVGLNTAVLRVQATDRDQGQNAAIHYSILSGNVAGQFYLHSLSGILDVINPLDFEDVQKYSLSIKAQDGGRPPLINSSGVVSVQVLDVNDNEPIFVSSPFQATVLENVPLGYPVVHIQAVDADSGENARLHYRLVDTASTFLGGGSAGPKNPAPTPDFPFQIHNSSGWITVCAELDREEVEHYSFGVEAVDHGSPPMSSSTSVSITVLDVNDNDPVFTQPTYELRLNEDAAVGSSVLTLQARDRDANSVITYQLTGGNTRNRFALSSQRGGGLITLALPLDYKQEQQYVLAVTASDGTRSHTAHVLINVTDANTHRPVFQSSHYTVSVSEDRPVGTSIATLSANDEDTGENARITYVIQDPVPQFRIDPDSGTMYTMMELDYENQVAYTLTIMAQDNGIPQKSDTTTLEILILDANDNAPQFLWDFYQGSIFEDAPPSTSILQVSATDRDSGPNGRLLYTFQGGDDGDGDFYIEPTSGVIRTQRRLDRENVAVYNLWALAVDRGSPTPLSASVEIQVTILDINDNAPMFEKDELELFVEENNPVGSVVAKIRANDPDEGPNAQIMYQIVEGDMRHFFQLDLLNGDLRAMVELDFEVRREYVLVVQATSAPLVSRATVHILLVDQNDNPPVLPDFQILFNNYVTNKSNSFPTGVIGCIPAHDPDVSDSLNYTFVQGNELRLLLLDPATGELQLSRDLDNNRPLEALMEVSVSDGIHSVTAFCTLRVTIITDDMLTNSITVRLENMSQEKFLSPLLALFVEGVAAVLSTTKDDVFVFNVQNDTDVSSNILNVTFSALLPGGVRGQFFPSEDLQEQIYLNRTLLTTISTQRVLPFDDNICLREPCENYMKCVSVLRFDSSAPFLSSTTVLFRPIHPINGLRCRCPPGFTGDYCETEIDLCYSDPCGANGRCRSREGGYTCECFEDFTGEHCEVDARSGRCANGVCKNGGTCVNLLIGGFHCVCPPGEYERPYCEVTTRSFPPQSFVTFRGLRQRFHFTISLTFATQERNGLLLYNGRFNEKHDFIALEIVDEQVQLTFSAGETTTTVAPKVPSGVSDGRWHSVQVQYYNKPNIGHLGLPHGPSGEKMAVVTVDDCDTTMAVRFGKDIGNYSCAAQGTQTGSKKSLDLTGPLLLGGVPNLPEDFPVHNRQFVGCMRNLSVDGKNVDMAGFIANNGTREGCAARRNFCDGRRCQNGGTCVNRWNMYLCECPLRFGGKNCEQAMPHPQLFSGESVVSWSDLNIIISVPWYLGLMFRTRKEDSVLMEATSGGPTSFRLQILNNYLQFEVSHGPSDVESVMLSGLRVTDGEWHHLLIELKNVKEDSEMKHLVTMTLDYGMDQNKADIGGMLPGLTVRSVVVGGASEDKVSVRRGFRGCMQGVRMGGTPTNVATLNMNNALKVRVKDGCDVDDPCTSSPCPPNSRCHDAWEDYSCVCDKGYLGINCVDACHLNPCENMGACVRSPGSPQGYVCECGPSHYGPYCENKLDLPCPRGWWGNPVCGPCHCAVSKGFDPDCNKTNGQCQCKENYYKLLAQDTCLPCDCFPHGSHSRTCDMATGQCACKPGVIGRQCNRCDNPFAEVTTLGCEVIYNGCPKAFEAGIWWPQTKFGQPAAVPCPKGSVGNAVRHCSGEKGWLPPELFNCTTISFVDLRAMNEKLSRNETQVDGARALQLVRALRSATQHTGTLFGNDVRTAYQLLGHVLQHESWQQGFDLAATQDADFHEDVIHSGSALLAPATRAAWEQIQRSEGGTAQLLRRLEGYFSNVARNVRRTYLRPFVIVTANMILAVDIFDKFNFTGARVPRFDTIHEEFPRELESSVSFPADFFRPPEEKEGPLLRPAGRRTTPQTTRPGPGTEREAPISRRRRHPDDAGQFAVALVIIYRTLGQLLPERYDPDRRSLRLPHRPIINTPMVSTLVYSEGAPLPRPLERPVLVEFALLEVEERTKPVCVFWNHSLAVGGTGGWSARGCELLSRNRTHVACQCSHTASFAVLMDISRRENGEVLPLKIVTYAAVSLSLAALLVAFVLLSLVRMLRSNLHSIHKHLAVALFLSQLVFVIGINQTENPFLCTVVAILLHYIYMSTFAWTLVESLHVYRMLTEVRNIDTGPMRFYYVVGWGIPAIVTGLAVGLDPQGYGNPDFCWLSLQDTLIWSFAGPIGAVIIINTVTSVLSAKVSCQRKHHYYGKKGIVSLLRTAFLLLLLISATWLLGLLAVNRDALSFHYLFAIFSGLQGPFVLLFHCVLNQEVRKHLKGVLGGRKLHLEDSATTRATLLTRSLNCNTTFGDGPDMLRTDLGESTASLDSIVRDEGIQKLGVSSGLVRGSHGEPDASLMPRSCKDPPGHDSDSDSELSLDEQSSSYASSHSSDSEDDGVGAEEKWDPARGAVHSTPKGDAVANHVPAGWPDQSLAESDSEDPSGKPRLKVETKVSVELHREEQGSHRGEYPPDQESGGAARLASSQPPEQRKGILKNKVTYPPPLTLTEQTLKGRLREKLADCEQSPTSSRTSSLGSGGPDCAITVKSPGREPGRDHLNGVAMNVRTGSAQADGSDSEKP.

A signal peptide spans 1–20 (MAPPPPPVLPVLLLLAAAAA). Topologically, residues 22–2469 (PAMGLRAAAW…RENGEVLPLK (2448 aa)) are extracellular. The interval 205–242 (AGTPSASPSPSPPLPPNLPEARAGPARRARRGTSGRGS) is disordered. Residues 211–222 (SPSPSPPLPPNL) are compositionally biased toward pro residues. Cadherin domains follow at residues 246–353 (PMPN…SPVF), 354–459 (EQSE…YPQF), 460–565 (SEQN…EPIF), 566–687 (VSSP…DPVF), 688–789 (TQPT…RPVF), 790–892 (QSSH…APQF), 893–999 (LWDF…APMF), 1000–1101 (EKDE…PPVL), and 1106–1224 (ILFN…SPLL). N-linked (GlcNAc...) asparagine glycans are attached at residues N403, N546, N634, and N778. N1114, N1139, N1213, N1249, N1259, and N1287 each carry an N-linked (GlcNAc...) asparagine glycan. Residues 1303–1361 (DDNICLREPCENYMKCVSVLRFDSSAPFLSSTTVLFRPIHPINGLRCRCPPGFTGDYCE) enclose the EGF-like 1; calcium-binding domain. Intrachain disulfides connect C1307-C1318, C1312-C1349, C1351-C1360, C1367-C1378, C1372-C1387, C1389-C1398, C1407-C1418, C1412-C1428, and C1430-C1440. The EGF-like 2; calcium-binding domain occupies 1363–1399 (EIDLCYSDPCGANGRCRSREGGYTCECFEDFTGEHCE). The EGF-like 3; calcium-binding domain maps to 1403 to 1441 (RSGRCANGVCKNGGTCVNLLIGGFHCVCPPGEYERPYCE). The Laminin G-like 1 domain maps to 1442 to 1646 (VTTRSFPPQS…IANNGTREGC (205 aa)). N1576, N1623, and N1640 each carry an N-linked (GlcNAc...) asparagine glycan. Intrachain disulfides connect C1620/C1646, C1653/C1664, C1658/C1673, C1675/C1684, C1840/C1870, C1876/C1887, C1881/C1896, C1898/C1907, C1911/C1922, C1916/C1934, C1936/C1945, C1953/C1966, and C1968/C1978. The EGF-like 4; calcium-binding domain maps to 1649–1685 (RRNFCDGRRCQNGGTCVNRWNMYLCECPLRFGGKNCE). N1666 is modified ((3R)-3-hydroxyasparagine). Residues 1689–1870 (PHPQLFSGES…ALKVRVKDGC (182 aa)) enclose the Laminin G-like 2 domain. The EGF-like 5; calcium-binding domain occupies 1872 to 1907 (VDDPCTSSPCPPNSRCHDAWEDYSCVCDKGYLGINC). D1889 bears the (3R)-3-hydroxyaspartate mark. One can recognise an EGF-like 6; calcium-binding domain in the interval 1908 to 1946 (VDACHLNPCENMGACVRSPGSPQGYVCECGPSHYGPYCE). The region spanning 1947-1979 (NKLDLPCPRGWWGNPVCGPCHCAVSKGFDPDCN) is the EGF-like 7; calcium-binding domain. A glycan (N-linked (GlcNAc...) asparagine) is linked at N1979. One can recognise an EGF-like 8; calcium-binding domain in the interval 1981 to 2016 (TNGQCQCKENYYKLLAQDTCLPCDCFPHGSHSRTCD). Disulfide bonds link C1985–C2000, C1987–C2003, C2005–C2015, C2024–C2033, and C2036–C2048. The 48-residue stretch at 2003–2050 (CDCFPHGSHSRTCDMATGQCACKPGVIGRQCNRCDNPFAEVTTLGCEV) folds into the Laminin EGF-like domain. N-linked (GlcNAc...) asparagine glycosylation is found at N2103, N2122, and N2257. The tract at residues 2291–2328 (PEEKEGPLLRPAGRRTTPQTTRPGPGTEREAPISRRRR) is disordered. Residues 2297–2461 (PLLRPAGRRT…AVLMDISRRE (165 aa)) form the GAIN-B domain. Residues 2300-2316 (RPAGRRTTPQTTRPGPG) show a composition bias toward low complexity. Intrachain disulfides connect C2411–C2443 and C2431–C2445. The interval 2411–2461 (CVFWNHSLAVGGTGGWSARGCELLSRNRTHVACQCSHTASFAVLMDISRRE) is GPS. N-linked (GlcNAc...) asparagine glycosylation is found at N2415 and N2437. The chain crosses the membrane as a helical span at residues 2470-2490 (IVTYAAVSLSLAALLVAFVLL). The Cytoplasmic portion of the chain corresponds to 2491–2501 (SLVRMLRSNLH). Residues 2502–2522 (SIHKHLAVALFLSQLVFVIGI) form a helical membrane-spanning segment. N2523 carries an N-linked (GlcNAc...) asparagine glycan. Over 2523-2527 (NQTEN) the chain is Extracellular. The chain crosses the membrane as a helical span at residues 2528-2548 (PFLCTVVAILLHYIYMSTFAW). Residues 2549-2572 (TLVESLHVYRMLTEVRNIDTGPMR) are Cytoplasmic-facing. A helical membrane pass occupies residues 2573-2593 (FYYVVGWGIPAIVTGLAVGLD). At 2594-2611 (PQGYGNPDFCWLSLQDTL) the chain is on the extracellular side. Residues 2612–2632 (IWSFAGPIGAVIIINTVTSVL) form a helical membrane-spanning segment. Residues 2633–2655 (SAKVSCQRKHHYYGKKGIVSLLR) are Cytoplasmic-facing. A helical membrane pass occupies residues 2656–2676 (TAFLLLLLISATWLLGLLAVN). Residues 2677–2683 (RDALSFH) lie on the Extracellular side of the membrane. Residues 2684 to 2704 (YLFAIFSGLQGPFVLLFHCVL) form a helical membrane-spanning segment. The Cytoplasmic portion of the chain corresponds to 2705–3014 (NQEVRKHLKG…QADGSDSEKP (310 aa)). S2761 and S2764 each carry phosphoserine. Disordered stretches follow at residues 2777–2939 (SSGL…PPPL) and 2954–3014 (LADC…SEKP). Basic and acidic residues predominate over residues 2796-2806 (SCKDPPGHDSD). Positions 2814–2825 (DEQSSSYASSHS) are enriched in low complexity. A phosphoserine mark is found at S2871 and S2873. Positions 2876 to 2904 (PSGKPRLKVETKVSVELHREEQGSHRGEY) are enriched in basic and acidic residues. The segment covering 2960–2969 (SPTSSRTSSL) has biased composition (low complexity). Positions 2983 to 2992 (PGREPGRDHL) are enriched in basic and acidic residues.

Belongs to the G-protein coupled receptor 2 family. LN-TM7 subfamily. Post-translationally, the iron and 2-oxoglutarate dependent 3-hydroxylation of aspartate and asparagine is (R) stereospecific within EGF domains.

The protein resides in the cell membrane. Functionally, receptor that may have an important role in cell/cell signaling during nervous system formation. This chain is Cadherin EGF LAG seven-pass G-type receptor 1 (CELSR1), found in Homo sapiens (Human).